The sequence spans 468 residues: Argininosuccinate synthase (468 aa).

Residues 10–18 (AYSGGLDTS) and Ala37 contribute to the ATP site. The L-citrulline site is built by Tyr90 and Ser95. ATP is bound at residue Gly120. L-aspartate is bound by residues Thr122, Asn126, and Asp127. Asn126 provides a ligand contact to L-citrulline. Positions 130, 182, 191, 267, and 279 each coordinate L-citrulline. Low complexity predominate over residues 445–457 (PVAAKATAKPVKA). A disordered region spans residues 445–468 (PVAAKATAKPVKAPVKKPIAKKKG). Residues 458–468 (PVKKPIAKKKG) show a composition bias toward basic residues.

The protein belongs to the argininosuccinate synthase family. Type 1 subfamily. In terms of assembly, homotetramer.

It is found in the cytoplasm. The enzyme catalyses L-citrulline + L-aspartate + ATP = 2-(N(omega)-L-arginino)succinate + AMP + diphosphate + H(+). The protein operates within amino-acid biosynthesis; L-arginine biosynthesis; L-arginine from L-ornithine and carbamoyl phosphate: step 2/3. In Dechloromonas aromatica (strain RCB), this protein is Argininosuccinate synthase.